Here is a 350-residue protein sequence, read N- to C-terminus: Deoxyribonuclease-2-alpha (350 aa).

The first 19 residues, 1–19 (MAAPSSLLLAALLWVPAEA), serve as a signal peptide directing secretion. Residues cysteine 22 and cysteine 162 are joined by a disulfide bond. N-linked (GlcNAc...) asparagine glycosylation is found at asparagine 89, asparagine 215, asparagine 269, and asparagine 293. 2 cysteine pairs are disulfide-bonded: cysteine 270–cysteine 350 and cysteine 311–cysteine 330. The active site involves histidine 298.

It belongs to the DNase II family. In terms of tissue distribution, ubiquitous.

The protein localises to the lysosome. The enzyme catalyses Endonucleolytic cleavage to nucleoside 3'-phosphates and 3'-phosphooligonucleotide end-products.. Functionally, hydrolyzes DNA under acidic conditions with a preference for double-stranded DNA. Plays a major role in the clearance of nucleic acids generated through apoptosis, hence preventing autoinflammation. Necessary for proper fetal development and for definitive erythropoiesis in fetal liver and bone marrow, where it degrades nuclear DNA expelled from erythroid precursor cells. The polypeptide is Deoxyribonuclease-2-alpha (Dnase2) (Rattus norvegicus (Rat)).